Reading from the N-terminus, the 481-residue chain is UDP-glycosyltransferase 72B3 (481 aa).

UDP-alpha-D-glucose contacts are provided by residues S277, 347–349 (APQ), 364–372 (HCGWNSSLE), and 386–389 (YAEQ).

The protein belongs to the UDP-glycosyltransferase family.

Functionally, possesses low quercetin 3-O-glucosyltransferase activity in vitro. This is UDP-glycosyltransferase 72B3 (UGT72B3) from Arabidopsis thaliana (Mouse-ear cress).